We begin with the raw amino-acid sequence, 513 residues long: Teichoic acid ribitol-phosphate polymerase TarK (513 aa).

Belongs to the CDP-glycerol glycerophosphotransferase family.

It localises to the cell membrane. The enzyme catalyses 4-O-[di(2R)-glycerylphospho]-N-acetyl-beta-D-mannosaminyl-(1-&gt;4)-N-acetyl-alpha-D-glucosaminyl di-trans,octa-cis-undecaprenyl diphosphate + n CDP-L-ribitol = 4-O-[(D-ribitylphospho)(n)-di{(2R)-glycerylphospho}]-N-acetyl-beta-D-mannosaminyl-(1-&gt;4)-N-acetyl-alpha-D-glucosaminyl di-trans,octa-cis-undecaprenyl diphosphate + n CMP + n H(+). It functions in the pathway cell wall biogenesis; poly(ribitol phosphate) teichoic acid biosynthesis. Its function is as follows. Can catalyze the polymerization of the main chain of the major teichoic acid by sequential transfer of ribitol phosphate units from CDP-ribitol to the second glycerol phosphate attached to the disaccharide linkage unit. This chain is Teichoic acid ribitol-phosphate polymerase TarK (tarK), found in Staphylococcus aureus (strain NCTC 8325 / PS 47).